The primary structure comprises 175 residues: Large ribosomal subunit protein bL17m (175 aa).

Residues 1–8 constitute a mitochondrion transit peptide; sequence MRLSVAAA. The interval 155–175 is disordered; it reads DLRQSQEASNHSSHTAQTPGI. Positions 161-175 are enriched in polar residues; that stretch reads EASNHSSHTAQTPGI.

This sequence belongs to the bacterial ribosomal protein bL17 family. In terms of assembly, component of the mitochondrial large ribosomal subunit (mt-LSU). Mature mammalian 55S mitochondrial ribosomes consist of a small (28S) and a large (39S) subunit. The 28S small subunit contains a 12S ribosomal RNA (12S mt-rRNA) and 30 different proteins. The 39S large subunit contains a 16S rRNA (16S mt-rRNA), a copy of mitochondrial valine transfer RNA (mt-tRNA(Val)), which plays an integral structural role, and 52 different proteins. Detected in adrenal gland, mammary gland and adipose tissue.

The protein resides in the mitochondrion. The polypeptide is Large ribosomal subunit protein bL17m (MRPL17) (Homo sapiens (Human)).